Here is a 549-residue protein sequence, read N- to C-terminus: Undecaprenyl phosphate-alpha-4-amino-4-deoxy-L-arabinose arabinosyl transferase (549 aa).

The next 12 membrane-spanning stretches (helical) occupy residues 9–29, 80–100, 112–132, 136–156, 176–196, 204–224, 256–276, 288–308, 312–332, 346–366, 376–396, and 402–422; these read LLLI…GLWI, LFGV…LAYL, SLAC…SGYA, PQFT…LDAG, FLTK…PYML, LLGY…PWAL, PWWF…GLLP, QPPV…FSLS, LPTY…HALV, NGLL…YLQL, FELF…LAQW, and AWAA…AAMP.

Belongs to the glycosyltransferase 83 family.

The protein localises to the cell inner membrane. The catalysed reaction is 4-amino-4-deoxy-alpha-L-arabinopyranosyl di-trans,octa-cis-undecaprenyl phosphate + lipid IVA = lipid IIA + di-trans,octa-cis-undecaprenyl phosphate.. It participates in lipopolysaccharide metabolism; 4-amino-4-deoxy-beta-L-arabinose-lipid A biosynthesis. Functionally, catalyzes the transfer of the L-Ara4N moiety of the glycolipid undecaprenyl phosphate-alpha-L-Ara4N to lipid A. The modified arabinose is attached to lipid A and is required for resistance to polymyxin and cationic antimicrobial peptides. The sequence is that of Undecaprenyl phosphate-alpha-4-amino-4-deoxy-L-arabinose arabinosyl transferase from Pseudomonas paraeruginosa (strain DSM 24068 / PA7) (Pseudomonas aeruginosa (strain PA7)).